We begin with the raw amino-acid sequence, 203 residues long: Probable chemoreceptor glutamine deamidase CheD (203 aa).

Belongs to the CheD family.

The catalysed reaction is L-glutaminyl-[protein] + H2O = L-glutamyl-[protein] + NH4(+). Functionally, probably deamidates glutamine residues to glutamate on methyl-accepting chemotaxis receptors (MCPs), playing an important role in chemotaxis. The chain is Probable chemoreceptor glutamine deamidase CheD from Herminiimonas arsenicoxydans.